A 495-amino-acid polypeptide reads, in one-letter code: Cobyric acid synthase (495 aa).

Residues 249-442 (KFIVKVPVVT…LHGVFDEPEA (194 aa)) enclose the GATase cobBQ-type domain. C330 serves as the catalytic Nucleophile. The active site involves H434.

It belongs to the CobB/CobQ family. CobQ subfamily.

Its pathway is cofactor biosynthesis; adenosylcobalamin biosynthesis. Its function is as follows. Catalyzes amidations at positions B, D, E, and G on adenosylcobyrinic A,C-diamide. NH(2) groups are provided by glutamine, and one molecule of ATP is hydrogenolyzed for each amidation. The protein is Cobyric acid synthase of Aliivibrio fischeri (strain ATCC 700601 / ES114) (Vibrio fischeri).